The sequence spans 522 residues: E3 ubiquitin-protein ligase TRIM65 (522 aa).

At alanine 2 the chain carries N-acetylalanine. The RING-type zinc-finger motif lies at 13-52; that stretch reads CSICLGRYRDPVTLPCGHSFCGNCIQDSWRSCEKSCPECR. Residues 92-134 form a B box-type zinc finger; that stretch reads SHSARCLRHGRPLEFFCRTEGLCVCSACTVHDCSHHERALLDV. A coiled-coil region spans residues 141-229; the sequence is DQLRARVLVT…QRLTDHLRAL (89 aa). Phosphoserine is present on serine 187. The B30.2/SPRY domain occupies 316 to 509; it reads APVPSAVCPL…LTLCHQPEAT (194 aa).

This sequence belongs to the TRIM/RBCC family. In terms of assembly, homo-multimerizes. Interacts with ARRDC4.

Its subcellular location is the cytoplasm. It carries out the reaction S-ubiquitinyl-[E2 ubiquitin-conjugating enzyme]-L-cysteine + [acceptor protein]-L-lysine = [E2 ubiquitin-conjugating enzyme]-L-cysteine + N(6)-ubiquitinyl-[acceptor protein]-L-lysine.. Its pathway is protein modification; protein ubiquitination. Functionally, E3 ubiquitin ligase that plays a role in several processes including innate immnity, autophagy or inflammation. Negatively regulates miRNAs by modulating the ubiquitination and stability of TNRC6A, a protein involved in RNA-mediated gene silencing by both micro-RNAs (miRNAs) and short interfering RNAs. This ubiquitination results in the suppressed expression of miR-138-5p leading to increased autophagy. Upon enteroviral infection, promotes 'Lys-63'-mediated ubiquitination activation of IFIH1/MDA5 leading to innate signaling cascade. Mechanistically, selectively recognizes MDA5 filaments that occur on dsRNAs. Also plays a role in limitation of inflammation through different mechanisms. First, promotes 'Lys-48'-mediated ubiquitination of VCAM1 leading to its degradation and limitation of LPS-induced lung inflammation. In addition, negatively regulates inflammasome activation by promoting 'lys48'-linked ubiquitination of NLRP3 which is critical for the inhibition of NLRP3 inflammasome activation in resting macrophages. In Mus musculus (Mouse), this protein is E3 ubiquitin-protein ligase TRIM65 (Trim65).